The following is a 359-amino-acid chain: Type-1 angiotensin II receptor (359 aa).

Topologically, residues 1–25 are extracellular; sequence MVPNYSTEETVKRIHVDCPVSGRHS. A glycan (N-linked (GlcNAc...) asparagine) is linked at N4. D17 is an angiotensin II binding site. Disulfide bonds link C18/C274 and C101/C180. Residues 26–55 form a helical membrane-spanning segment; that stretch reads YIYIMVPTVYSIIFIIGIFGNSLVVIVIYC. At 56–61 the chain is on the cytoplasmic side; sequence YMKLKT. The helical transmembrane segment at 62-89 threads the bilayer; that stretch reads VASIFLLNLALADLCFLITLPLWAAYTA. Topologically, residues 90-98 are extracellular; the sequence is MEYQWPFGN. Residues 99–125 traverse the membrane as a helical segment; that stretch reads CLCKLASAGISFNLYASVFLLTCLSID. Residues 126–141 lie on the Cytoplasmic side of the membrane; that stretch reads RYLAIVHPVKSRIRRT. A helical transmembrane segment spans residues 142 to 165; sequence MFVARVTCIVIWLLAGVASLPVII. At 166 to 190 the chain is on the extracellular side; it reads HRNIFFAENLNMTVCGFRYDNNNTT. R167 contributes to the angiotensin II binding site. N176 carries an N-linked (GlcNAc...) asparagine glycan. The angiotensin II site is built by F182 and Y184. N-linked (GlcNAc...) asparagine glycosylation is found at N187 and N188. Residues 191-216 form a helical membrane-spanning segment; sequence LRVGLGLSKNLLGFLIPFLIILTSYT. K199 provides a ligand contact to angiotensin II. The Cytoplasmic segment spans residues 217–239; sequence LIWKTLKKAYQIQRNKTRNDDIF. Residues 240–268 traverse the membrane as a helical segment; it reads KMIVAIVFFFFFSWIPHQVFTFLDVLIQL. Over 269–278 the chain is Extracellular; the sequence is HVITDCKITD. Residues 279–304 form a helical membrane-spanning segment; sequence IVDTAMPFTICIAYFNNCLNPFFYVF. Over 305–359 the chain is Cytoplasmic; the sequence is FGKNFKKYFLQLIKYIPPNVSTHPSLTTKMSSLSYRPPENIRLPTKKTAGSFDAE.

It belongs to the G-protein coupled receptor 1 family. In terms of processing, C-terminal Ser or Thr residues may be phosphorylated.

The protein resides in the cell membrane. Its function is as follows. Receptor for angiotensin II, a vasoconstricting peptide, which acts as a key regulator of blood pressure and sodium retention by the kidney. The activated receptor in turn couples to G-alpha proteins G(q) (GNAQ, GNA11, GNA14 or GNA15) and thus activates phospholipase C and increases the cytosolic Ca(2+) concentrations, which in turn triggers cellular responses such as stimulation of protein kinase C. In Gallus gallus (Chicken), this protein is Type-1 angiotensin II receptor (AGTR1).